The chain runs to 235 residues: Large ribosomal subunit protein bL25 (235 aa).

2 disordered regions span residues 1–21 and 210–235; these read MADN…PARR and APAA…GAKK. Residues 210–222 show a composition bias toward low complexity; the sequence is APAAGAAPAAGGE. A compositionally biased stretch (basic and acidic residues) spans 223–235; it reads AAKKAPEAKGAKK.

This sequence belongs to the bacterial ribosomal protein bL25 family. CTC subfamily. In terms of assembly, part of the 50S ribosomal subunit; part of the 5S rRNA/L5/L18/L25 subcomplex. Contacts the 5S rRNA. Binds to the 5S rRNA independently of L5 and L18.

In terms of biological role, this is one of the proteins that binds to the 5S RNA in the ribosome where it forms part of the central protuberance. This chain is Large ribosomal subunit protein bL25, found in Anaeromyxobacter sp. (strain Fw109-5).